Reading from the N-terminus, the 1189-residue chain is Zinc finger CCCH domain-containing protein 6 (1189 aa).

Basic and acidic residues predominate over residues 1–12; it reads MTDSEHAGHDRE. A disordered region spans residues 1 to 105; that stretch reads MTDSEHAGHD…HKKRTGFYRD (105 aa). Over residues 13 to 28 the composition is skewed to acidic residues; that stretch reads DGELEDGEIDDAGFEE. A coiled-coil region spans residues 27–73; sequence EEIQEKEAKENEKQKSEKAYRKSRKKHKKEREKKKSKRRKREKHKHN. Residues 29–46 are compositionally biased toward basic and acidic residues; that stretch reads IQEKEAKENEKQKSEKAY. A compositionally biased stretch (basic residues) spans 47-73; sequence RKSRKKHKKEREKKKSKRRKREKHKHN. C3H1-type zinc fingers lie at residues 273 to 299, 301 to 328, and 329 to 352; these read KGKQ…HDAE, EKRK…HNEF, and PCKF…HDDL. Positions 353–385 form a coiled coil; sequence TKETKKLLDKVLNTDEELINEDERELEELRKRG. Disordered regions lie at residues 451 to 530, 630 to 659, 676 to 755, 947 to 1026, and 1051 to 1189; these read FYTS…GPQN, PPVV…PVPG, YQED…GNQV, LEQF…PYAP, and PRDH…SPFC. Residues 461 to 478 are compositionally biased toward low complexity; the sequence is QFQGSSPHPQHIYSSGSS. Over residues 505-525 the composition is skewed to pro residues; that stretch reads AGPPGLPVPQSPPLPPGPPEI. A compositionally biased stretch (low complexity) spans 639-659; the sequence is HGSGSDGSSTRTGHGPLPVPG. Polar residues predominate over residues 718–741; that stretch reads KTLQKQTETLRNQQQPSTELSTPT. Residues 961–973 are compositionally biased toward basic and acidic residues; sequence GDPRLQKNFDPRL. Composition is skewed to low complexity over residues 1009–1020 and 1056–1069; these read SGAGTSNSGSGA and SSST…SSGE. Residue serine 1158 is modified to Phosphoserine. Residues 1164 to 1179 show a composition bias toward basic and acidic residues; sequence DPGRETDDKSLKEVFK.

In Homo sapiens (Human), this protein is Zinc finger CCCH domain-containing protein 6 (ZC3H6).